The primary structure comprises 203 residues: High frequency lysogenization protein HflD homolog (203 aa).

This sequence belongs to the HflD family.

The protein localises to the cytoplasm. The protein resides in the cell inner membrane. In Pasteurella multocida (strain Pm70), this protein is High frequency lysogenization protein HflD homolog.